The chain runs to 507 residues: ATP synthase subunit alpha, chloroplastic (507 aa).

170 to 177 (GDRQTGKT) provides a ligand contact to ATP. At threonine 257 the chain carries Phosphothreonine.

This sequence belongs to the ATPase alpha/beta chains family. As to quaternary structure, F-type ATPases have 2 components, CF(1) - the catalytic core - and CF(0) - the membrane proton channel. CF(1) has five subunits: alpha(3), beta(3), gamma(1), delta(1), epsilon(1). CF(0) has four main subunits: a, b, b' and c.

It is found in the plastid. The protein localises to the chloroplast thylakoid membrane. It catalyses the reaction ATP + H2O + 4 H(+)(in) = ADP + phosphate + 5 H(+)(out). Functionally, produces ATP from ADP in the presence of a proton gradient across the membrane. The alpha chain is a regulatory subunit. The chain is ATP synthase subunit alpha, chloroplastic from Aethionema grandiflorum (Persian stone-cress).